The primary structure comprises 355 residues: Histidinol-phosphate aminotransferase (355 aa).

Lysine 218 is subject to N6-(pyridoxal phosphate)lysine.

This sequence belongs to the class-II pyridoxal-phosphate-dependent aminotransferase family. Histidinol-phosphate aminotransferase subfamily. As to quaternary structure, homodimer. It depends on pyridoxal 5'-phosphate as a cofactor.

It catalyses the reaction L-histidinol phosphate + 2-oxoglutarate = 3-(imidazol-4-yl)-2-oxopropyl phosphate + L-glutamate. Its pathway is amino-acid biosynthesis; L-histidine biosynthesis; L-histidine from 5-phospho-alpha-D-ribose 1-diphosphate: step 7/9. The sequence is that of Histidinol-phosphate aminotransferase from Pelodictyon phaeoclathratiforme (strain DSM 5477 / BU-1).